A 201-amino-acid polypeptide reads, in one-letter code: Adenylyl-sulfate kinase (201 aa).

Position 35–42 (35–42 (GLSGSGKS)) interacts with ATP. S109 serves as the catalytic Phosphoserine intermediate.

The protein belongs to the APS kinase family.

The enzyme catalyses adenosine 5'-phosphosulfate + ATP = 3'-phosphoadenylyl sulfate + ADP + H(+). It participates in sulfur metabolism; hydrogen sulfide biosynthesis; sulfite from sulfate: step 2/3. Catalyzes the synthesis of activated sulfate. The polypeptide is Adenylyl-sulfate kinase (Salmonella paratyphi A (strain AKU_12601)).